A 484-amino-acid chain; its full sequence is MKFIVKLYPEIMMKSKSVRMRFTKMLETNIRNVLKNVDEGAKVQRLYDRIIVQVPSDKPELCDVFADRLACIPGIAHVVQVSEYSFDSIDHIYQQALPKYRDEIAGKTFCVRVKRSGNHDFNSIDVERYVGGGLNQHTEALGVKLKDPDVTVNLEINQDKLYMVERRIQGLGGFPMATQEDVLSLISGGFDSGVSSFQFIKKGARTHYCFFNLGGAQHEIGVKQVAYHLWKKYGESHKVRFVSVPFEPVVEEILERIDNGQMGVVLKRVMMRAATRIADKYGIQALVTGESLGQVSSQTLTNLNVIDRSTDLLILRPLIAMDKQDIINQSRIIGTEDFAKSIPEYCGVISQKPTVKAVLSKVEAEELKFSEDLIDRVVASAVVMDIRDIEAEMNQQVTETETVKDVASGEIIIDVRAPEEEERSPLLIDNVMVKAIPFFKLATQFADLDKSKTYLLYCDRGVMSKLQALYLVEQGYTNVKVYRP.

The region spanning 63–167 (DVFADRLACI…QDKLYMVERR (105 aa)) is the THUMP domain. ATP is bound by residues 185–186 (LI), K267, G289, and Q298. The cysteines at positions 346 and 458 are disulfide-linked. Residues 406-484 (VASGEIIIDV…GYTNVKVYRP (79 aa)) enclose the Rhodanese domain. The active-site Cysteine persulfide intermediate is the C458.

It belongs to the ThiI family.

The protein localises to the cytoplasm. It catalyses the reaction [ThiI sulfur-carrier protein]-S-sulfanyl-L-cysteine + a uridine in tRNA + 2 reduced [2Fe-2S]-[ferredoxin] + ATP + H(+) = [ThiI sulfur-carrier protein]-L-cysteine + a 4-thiouridine in tRNA + 2 oxidized [2Fe-2S]-[ferredoxin] + AMP + diphosphate. The catalysed reaction is [ThiS sulfur-carrier protein]-C-terminal Gly-Gly-AMP + S-sulfanyl-L-cysteinyl-[cysteine desulfurase] + AH2 = [ThiS sulfur-carrier protein]-C-terminal-Gly-aminoethanethioate + L-cysteinyl-[cysteine desulfurase] + A + AMP + 2 H(+). It functions in the pathway cofactor biosynthesis; thiamine diphosphate biosynthesis. Functionally, catalyzes the ATP-dependent transfer of a sulfur to tRNA to produce 4-thiouridine in position 8 of tRNAs, which functions as a near-UV photosensor. Also catalyzes the transfer of sulfur to the sulfur carrier protein ThiS, forming ThiS-thiocarboxylate. This is a step in the synthesis of thiazole, in the thiamine biosynthesis pathway. The sulfur is donated as persulfide by IscS. In Shewanella frigidimarina (strain NCIMB 400), this protein is tRNA sulfurtransferase.